The following is a 424-amino-acid chain: Histidine--tRNA ligase (424 aa).

It belongs to the class-II aminoacyl-tRNA synthetase family. Homodimer.

It localises to the cytoplasm. It catalyses the reaction tRNA(His) + L-histidine + ATP = L-histidyl-tRNA(His) + AMP + diphosphate + H(+). The sequence is that of Histidine--tRNA ligase from Shewanella denitrificans (strain OS217 / ATCC BAA-1090 / DSM 15013).